A 430-amino-acid chain; its full sequence is ATP-dependent protease ATPase subunit HslU (430 aa).

Residues V18, 60 to 65 (GVGKTE), D243, E308, and R380 contribute to the ATP site.

Belongs to the ClpX chaperone family. HslU subfamily. A double ring-shaped homohexamer of HslV is capped on each side by a ring-shaped HslU homohexamer. The assembly of the HslU/HslV complex is dependent on binding of ATP.

Its subcellular location is the cytoplasm. Functionally, ATPase subunit of a proteasome-like degradation complex; this subunit has chaperone activity. The binding of ATP and its subsequent hydrolysis by HslU are essential for unfolding of protein substrates subsequently hydrolyzed by HslV. HslU recognizes the N-terminal part of its protein substrates and unfolds these before they are guided to HslV for hydrolysis. This is ATP-dependent protease ATPase subunit HslU from Caulobacter vibrioides (strain ATCC 19089 / CIP 103742 / CB 15) (Caulobacter crescentus).